A 117-amino-acid chain; its full sequence is uncharacterized protein (117 aa).

The protein localises to the plastid. It is found in the chloroplast. This is an uncharacterized protein from Chlamydomonas reinhardtii (Chlamydomonas smithii).